A 258-amino-acid chain; its full sequence is Cytochrome P450 1A2 (258 aa).

Belongs to the cytochrome P450 family. Requires heme as cofactor.

Its subcellular location is the endoplasmic reticulum membrane. The protein resides in the microsome membrane. It catalyses the reaction an organic molecule + reduced [NADPH--hemoprotein reductase] + O2 = an alcohol + oxidized [NADPH--hemoprotein reductase] + H2O + H(+). In terms of biological role, cytochromes P450 are a group of heme-thiolate monooxygenases. In liver microsomes, this enzyme is involved in an NADPH-dependent electron transport pathway. It oxidizes a variety of structurally unrelated compounds, including steroids, fatty acids, and xenobiotics. This Gallus gallus (Chicken) protein is Cytochrome P450 1A2 (CYP1A2).